The chain runs to 163 residues: NADH-quinone oxidoreductase subunit I (163 aa).

2 4Fe-4S ferredoxin-type domains span residues 54-84 (LRRY…IDSH) and 94-123 (TRYD…LTRL). Positions 64, 67, 70, 74, 103, 106, 109, and 113 each coordinate [4Fe-4S] cluster.

It belongs to the complex I 23 kDa subunit family. NDH-1 is composed of 14 different subunits. Subunits NuoA, H, J, K, L, M, N constitute the membrane sector of the complex. It depends on [4Fe-4S] cluster as a cofactor.

It is found in the cell inner membrane. The catalysed reaction is a quinone + NADH + 5 H(+)(in) = a quinol + NAD(+) + 4 H(+)(out). NDH-1 shuttles electrons from NADH, via FMN and iron-sulfur (Fe-S) centers, to quinones in the respiratory chain. The immediate electron acceptor for the enzyme in this species is believed to be ubiquinone. Couples the redox reaction to proton translocation (for every two electrons transferred, four hydrogen ions are translocated across the cytoplasmic membrane), and thus conserves the redox energy in a proton gradient. The polypeptide is NADH-quinone oxidoreductase subunit I (Halorhodospira halophila (strain DSM 244 / SL1) (Ectothiorhodospira halophila (strain DSM 244 / SL1))).